Consider the following 213-residue polypeptide: Orotate phosphoribosyltransferase (213 aa).

Lys26 lines the 5-phospho-alpha-D-ribose 1-diphosphate pocket. Residue 34 to 35 (FF) coordinates orotate. 5-phospho-alpha-D-ribose 1-diphosphate contacts are provided by residues 72-73 (YK), Arg99, Lys100, Lys103, His105, and 124-132 (DDVITAGTA). Orotate contacts are provided by Thr128 and Arg156.

It belongs to the purine/pyrimidine phosphoribosyltransferase family. PyrE subfamily. As to quaternary structure, homodimer. The cofactor is Mg(2+).

It catalyses the reaction orotidine 5'-phosphate + diphosphate = orotate + 5-phospho-alpha-D-ribose 1-diphosphate. The protein operates within pyrimidine metabolism; UMP biosynthesis via de novo pathway; UMP from orotate: step 1/2. Its function is as follows. Catalyzes the transfer of a ribosyl phosphate group from 5-phosphoribose 1-diphosphate to orotate, leading to the formation of orotidine monophosphate (OMP). The sequence is that of Orotate phosphoribosyltransferase from Pseudomonas aeruginosa (strain UCBPP-PA14).